Reading from the N-terminus, the 388-residue chain is Outer membrane protein assembly factor BamB (388 aa).

Residues 1–17 form the signal peptide; it reads MVLSLLSVMLLSGYKFL.

Belongs to the BamB family. In terms of assembly, part of the Bam complex, which is composed of the outer membrane protein BamA, and four lipoproteins BamB, BamC, BamD and BamE.

The protein localises to the cell outer membrane. In terms of biological role, part of the outer membrane protein assembly complex, which is involved in assembly and insertion of beta-barrel proteins into the outer membrane. This Moranella endobia (strain PCIT) protein is Outer membrane protein assembly factor BamB.